A 594-amino-acid polypeptide reads, in one-letter code: TOX high mobility group box family member 4-B (594 aa).

Disordered stretches follow at residues 160-225 (GTIL…PQKP) and 522-545 (ESPP…SPQC). The segment covering 207 to 217 (KPKTPKKKKKK) has biased composition (basic residues). The short motif at 212-217 (KKKKKK) is the Nuclear localization signal element. Residues 222–290 (PQKPLSAYAL…EYLKALALYK (69 aa)) constitute a DNA-binding region (HMG box).

Component of the PNUTS-PP1 phosphatase complex.

It localises to the nucleus. The protein resides in the chromosome. Its function is as follows. Transcription factor that modulates cell fate reprogramming from the somatic state to the pluripotent and neuronal fate. Also acts as a regulatory component of protein phosphatase 1 (PP1) complexes. Component of the PNUTS-PP1 protein phosphatase complex, a PP1 complex that regulates RNA polymerase II transcription pause-release. PNUTS-PP1 also plays a role in the control of chromatin structure and cell cycle progression during the transition from mitosis into interphase. This chain is TOX high mobility group box family member 4-B (tox4-b), found in Xenopus laevis (African clawed frog).